A 139-amino-acid polypeptide reads, in one-letter code: Flagellar assembly factor FliW 2 (139 aa).

This sequence belongs to the FliW family. As to quaternary structure, interacts with translational regulator CsrA and flagellin(s).

The protein resides in the cytoplasm. In terms of biological role, acts as an anti-CsrA protein, binds CsrA and prevents it from repressing translation of its target genes, one of which is flagellin. Binds to flagellin and participates in the assembly of the flagellum. This chain is Flagellar assembly factor FliW 2, found in Helicobacter hepaticus (strain ATCC 51449 / 3B1).